The sequence spans 386 residues: Ribonuclease D (386 aa).

One can recognise a 3'-5' exonuclease domain in the interval 3-174 (HTITTTDELA…EIYEYLSAEL (172 aa)). The HRDC domain maps to 213–294 (SGRVVAIAQQ…ARGMSVPNSE (82 aa)).

Belongs to the RNase D family. Requires a divalent metal cation as cofactor.

The protein localises to the cytoplasm. It carries out the reaction Exonucleolytic cleavage that removes extra residues from the 3'-terminus of tRNA to produce 5'-mononucleotides.. Functionally, exonuclease involved in the 3' processing of various precursor tRNAs. Initiates hydrolysis at the 3'-terminus of an RNA molecule and releases 5'-mononucleotides. The protein is Ribonuclease D of Jannaschia sp. (strain CCS1).